A 268-amino-acid chain; its full sequence is Tryptophan synthase alpha chain (268 aa).

Residues E49 and D60 each act as proton acceptor in the active site.

The protein belongs to the TrpA family. As to quaternary structure, tetramer of two alpha and two beta chains.

The catalysed reaction is (1S,2R)-1-C-(indol-3-yl)glycerol 3-phosphate + L-serine = D-glyceraldehyde 3-phosphate + L-tryptophan + H2O. It participates in amino-acid biosynthesis; L-tryptophan biosynthesis; L-tryptophan from chorismate: step 5/5. Functionally, the alpha subunit is responsible for the aldol cleavage of indoleglycerol phosphate to indole and glyceraldehyde 3-phosphate. The chain is Tryptophan synthase alpha chain from Erwinia tasmaniensis (strain DSM 17950 / CFBP 7177 / CIP 109463 / NCPPB 4357 / Et1/99).